Reading from the N-terminus, the 714-residue chain is Fatty acid oxidation complex subunit alpha (714 aa).

The segment at 1–190 is enoyl-CoA hydratase; sequence MEMASVFTLN…KLGLVDDVVP (190 aa). The segment at 306 to 714 is 3-hydroxyacyl-CoA dehydrogenase; it reads APLNSVGILG…FWKTTATDLQ (409 aa).

In the N-terminal section; belongs to the enoyl-CoA hydratase/isomerase family. This sequence in the central section; belongs to the 3-hydroxyacyl-CoA dehydrogenase family. Heterotetramer of two alpha chains (FadJ) and two beta chains (FadI).

It is found in the cytoplasm. The catalysed reaction is a (3S)-3-hydroxyacyl-CoA = a (2E)-enoyl-CoA + H2O. It carries out the reaction a 4-saturated-(3S)-3-hydroxyacyl-CoA = a (3E)-enoyl-CoA + H2O. It catalyses the reaction a (3S)-3-hydroxyacyl-CoA + NAD(+) = a 3-oxoacyl-CoA + NADH + H(+). The enzyme catalyses (3S)-3-hydroxybutanoyl-CoA = (3R)-3-hydroxybutanoyl-CoA. Its pathway is lipid metabolism; fatty acid beta-oxidation. Its function is as follows. Catalyzes the formation of a hydroxyacyl-CoA by addition of water on enoyl-CoA. Also exhibits 3-hydroxyacyl-CoA epimerase and 3-hydroxyacyl-CoA dehydrogenase activities. In Escherichia coli O139:H28 (strain E24377A / ETEC), this protein is Fatty acid oxidation complex subunit alpha.